Reading from the N-terminus, the 329-residue chain is 4-hydroxythreonine-4-phosphate dehydrogenase (329 aa).

2 residues coordinate substrate: His-136 and Thr-137. His-166, His-211, and His-266 together coordinate a divalent metal cation. 3 residues coordinate substrate: Lys-274, Asn-283, and Arg-292.

It belongs to the PdxA family. In terms of assembly, homodimer. Zn(2+) is required as a cofactor. Requires Mg(2+) as cofactor. The cofactor is Co(2+).

The protein resides in the cytoplasm. It carries out the reaction 4-(phosphooxy)-L-threonine + NAD(+) = 3-amino-2-oxopropyl phosphate + CO2 + NADH. The protein operates within cofactor biosynthesis; pyridoxine 5'-phosphate biosynthesis; pyridoxine 5'-phosphate from D-erythrose 4-phosphate: step 4/5. Its function is as follows. Catalyzes the NAD(P)-dependent oxidation of 4-(phosphooxy)-L-threonine (HTP) into 2-amino-3-oxo-4-(phosphooxy)butyric acid which spontaneously decarboxylates to form 3-amino-2-oxopropyl phosphate (AHAP). This chain is 4-hydroxythreonine-4-phosphate dehydrogenase, found in Shigella flexneri serotype 5b (strain 8401).